The following is a 100-amino-acid chain: Co-chaperonin GroES (100 aa).

The protein belongs to the GroES chaperonin family. As to quaternary structure, heptamer of 7 subunits arranged in a ring. Interacts with the chaperonin GroEL.

The protein localises to the cytoplasm. Functionally, together with the chaperonin GroEL, plays an essential role in assisting protein folding. The GroEL-GroES system forms a nano-cage that allows encapsulation of the non-native substrate proteins and provides a physical environment optimized to promote and accelerate protein folding. GroES binds to the apical surface of the GroEL ring, thereby capping the opening of the GroEL channel. The polypeptide is Co-chaperonin GroES (Mycolicibacterium paratuberculosis (strain ATCC BAA-968 / K-10) (Mycobacterium paratuberculosis)).